The primary structure comprises 446 residues: Na(+)-translocating NADH-quinone reductase subunit A (446 aa).

It belongs to the NqrA family. As to quaternary structure, composed of six subunits; NqrA, NqrB, NqrC, NqrD, NqrE and NqrF.

The catalysed reaction is a ubiquinone + n Na(+)(in) + NADH + H(+) = a ubiquinol + n Na(+)(out) + NAD(+). NQR complex catalyzes the reduction of ubiquinone-1 to ubiquinol by two successive reactions, coupled with the transport of Na(+) ions from the cytoplasm to the periplasm. NqrA to NqrE are probably involved in the second step, the conversion of ubisemiquinone to ubiquinol. The chain is Na(+)-translocating NADH-quinone reductase subunit A from Vibrio campbellii (strain ATCC BAA-1116).